Here is a 461-residue protein sequence, read N- to C-terminus: GTPase Era, mitochondrial (461 aa).

The N-terminal 35 residues, 1–35 (MAAPWLQRWRGAYAGPSGPLRLVRLHGVQRSSWRA), are a transit peptide targeting the mitochondrion. Positions 39–73 (AAGAFGAGPHPGPPQRAANPGPGPHPPPVATSREK) are disordered. Positions 89-354 (KVLRISIIGA…QYLLMQAKPG (266 aa)) constitute an Era-type G domain. The G1 stretch occupies residues 97 to 104 (GAPNSGKS). 97–104 (GAPNSGKS) provides a ligand contact to GTP. Residues 123 to 127 (HTTRC) form a G2 region. Residues 144-147 (DTPG) form a G3 region. GTP contacts are provided by residues 144 to 148 (DTPGL) and 213 to 216 (NKVD). Positions 213–216 (NKVD) are G4. A disordered region spans residues 260–319 (KVTQTPPPENRARESPCQLETDKAQEGSSLDNSSDVKASESSLDTEAREQKPYKYGDQKN). A compositionally biased stretch (basic and acidic residues) spans 269-284 (NRARESPCQLETDKAQ). Positions 285 to 303 (EGSSLDNSSDVKASESSLD) are enriched in polar residues. Over residues 304–319 (TEAREQKPYKYGDQKN) the composition is skewed to basic and acidic residues. Residues 332–334 (LAA) are G5. A KH type-2 domain is found at 380–461 (ILEYLPLEVP…RLKLKVEVKS (82 aa)).

Belongs to the TRAFAC class TrmE-Era-EngA-EngB-Septin-like GTPase superfamily. Era GTPase family.

It is found in the mitochondrion matrix. The protein localises to the mitochondrion inner membrane. In terms of biological role, probable GTPase that plays a role in the mitochondrial ribosomal small subunit assembly. Specifically binds the 12S mitochondrial rRNA (12S mt-rRNA) to a 33 nucleotide section delineating the 3' terminal stem-loop region. May act as a chaperone that protects the 12S mt-rRNA on the 28S mitoribosomal subunit during ribosomal small subunit assembly. The sequence is that of GTPase Era, mitochondrial (ERAL1) from Gallus gallus (Chicken).